Here is a 174-residue protein sequence, read N- to C-terminus: Phosphopantetheine adenylyltransferase (174 aa).

Thr10 serves as a coordination point for substrate. Residues 10–11 (TF) and His18 each bind ATP. Residues Lys44, Leu76, and Arg90 each coordinate substrate. Residues 91–93 (GLR), Glu101, and 126–132 (HAYISSS) each bind ATP.

It belongs to the bacterial CoaD family. Homohexamer. Mg(2+) serves as cofactor.

The protein resides in the cytoplasm. The enzyme catalyses (R)-4'-phosphopantetheine + ATP + H(+) = 3'-dephospho-CoA + diphosphate. It participates in cofactor biosynthesis; coenzyme A biosynthesis; CoA from (R)-pantothenate: step 4/5. Functionally, reversibly transfers an adenylyl group from ATP to 4'-phosphopantetheine, yielding dephospho-CoA (dPCoA) and pyrophosphate. The polypeptide is Phosphopantetheine adenylyltransferase (Alkalilimnicola ehrlichii (strain ATCC BAA-1101 / DSM 17681 / MLHE-1)).